Reading from the N-terminus, the 54-residue chain is Small ribosomal subunit protein uS14 (54 aa).

Residues cysteine 19, cysteine 22, cysteine 37, and cysteine 40 each contribute to the Zn(2+) site.

This sequence belongs to the universal ribosomal protein uS14 family. Zinc-binding uS14 subfamily. Part of the 30S ribosomal subunit. The cofactor is Zn(2+).

Its function is as follows. Binds 16S rRNA, required for the assembly of 30S particles. This is Small ribosomal subunit protein uS14 from Saccharolobus solfataricus (strain ATCC 35092 / DSM 1617 / JCM 11322 / P2) (Sulfolobus solfataricus).